The primary structure comprises 175 residues: Large ribosomal subunit protein uL10 (175 aa).

It belongs to the universal ribosomal protein uL10 family. Part of the ribosomal stalk of the 50S ribosomal subunit. The N-terminus interacts with L11 and the large rRNA to form the base of the stalk. The C-terminus forms an elongated spine to which L12 dimers bind in a sequential fashion forming a multimeric L10(L12)X complex.

In terms of biological role, forms part of the ribosomal stalk, playing a central role in the interaction of the ribosome with GTP-bound translation factors. In Prochlorococcus marinus (strain MIT 9215), this protein is Large ribosomal subunit protein uL10.